The following is a 438-amino-acid chain: MCKDYVYDIDIEQIAKEEQGEALKLQASTSTEVSQQQCSVPGLGEKYPTWETTKPELELLGHNPRRRRIASSFTIGLRGLINLGNTCFMNCIVQALTHTPILRDFFLSDRHRCEMPSPELCLVCEMSSLFRELYSGNPSPHVPYKLLHLVWIHARHLAGYRQQDAHEFLIAALDVLHRHCKGDDVGKVASNPNHCNCIIDQIFTGGLQSDVTCQACHGVSTTIDPCWDISLDLPGSCTSFWPMSPGRESSLNGESHIPGITTLTDCLRRFTRPEHLGSSAKIKCGSCQSYQESTKQLTMKKLPVVACFHFKRFEHSAKQRRKITTYISFPLELDMTPFMASSKETRVNGQLQLPTNSANNENKYSLFAVVNHQGTLESGHYTSFIRHHRDQWFKCDDAVITKASIKDVLDSEGYLLFYHKQVLEPEPEKVKEMTPQAY.

One can recognise a USP domain in the interval 78–421 (RGLINLGNTC…EGYLLFYHKQ (344 aa)). The active-site Nucleophile is Cys-87. Residue His-380 is the Proton acceptor of the active site.

This sequence belongs to the peptidase C19 family. In terms of assembly, interacts with phosphorylated BCL2L11 isoform BIMEL; this interaction leads to BCL2L11 deubiquitination and stabilization.

It is found in the cytoplasm. The protein localises to the cytosol. Its subcellular location is the nucleus. It catalyses the reaction Thiol-dependent hydrolysis of ester, thioester, amide, peptide and isopeptide bonds formed by the C-terminal Gly of ubiquitin (a 76-residue protein attached to proteins as an intracellular targeting signal).. Deubiquitinase involved in innate antiviral immunity by mediating deubiquitination of CGAS and RIGI. Negatively regulates RIGI by mediating 'Lys-63'-linked deubiquitination of RIGI, inhibiting type I interferon signaling. Also regulates 'Lys-63'-linked ubiquitination level of MDA5/IFIH1. Acts as a positive regulator of the cGAS-STING pathway by catalyzing 'Lys-48'-linked deubiquitination of CGAS, thereby promoting its stabilization. Can reduce the levels of BCL2L11/BIM ubiquitination and stabilize BCL2L11 in response to the RAF-MAPK-degradation signal. By acting on BCL2L11 levels, may counteract the anti-apoptotic effects of MAPK activity. This chain is Ubiquitin carboxyl-terminal hydrolase 27, found in Mus musculus (Mouse).